The sequence spans 412 residues: Thyroxine-binding globulin (412 aa).

The signal sequence occupies residues 1–16; sequence MPLFLYMVLLVLGIHC. 5 N-linked (GlcNAc...) asparagine glycosylation sites follow: asparagine 20, asparagine 35, asparagine 98, asparagine 164, and asparagine 252. Positions 292 and 395 each coordinate thyroxine.

Belongs to the serpin family. As to expression, expressed by the liver and secreted in plasma.

The protein resides in the secreted. Its function is as follows. Major thyroid hormone transport protein in serum. The protein is Thyroxine-binding globulin (SERPINA7) of Sus scrofa (Pig).